Consider the following 394-residue polypeptide: 1-deoxy-D-xylulose 5-phosphate reductoisomerase (394 aa).

NADPH contacts are provided by threonine 11, glycine 12, serine 13, isoleucine 14, glycine 37, asparagine 39, and asparagine 126. Lysine 127 is a binding site for 1-deoxy-D-xylulose 5-phosphate. Residue glutamate 128 participates in NADPH binding. Position 152 (aspartate 152) interacts with Mn(2+). Positions 153, 154, 178, and 201 each coordinate 1-deoxy-D-xylulose 5-phosphate. Residue glutamate 154 coordinates Mn(2+). Glycine 207 is a binding site for NADPH. 1-deoxy-D-xylulose 5-phosphate-binding residues include serine 214, asparagine 219, lysine 220, and glutamate 223. Glutamate 223 contributes to the Mn(2+) binding site.

The protein belongs to the DXR family. Mg(2+) serves as cofactor. Requires Mn(2+) as cofactor.

It carries out the reaction 2-C-methyl-D-erythritol 4-phosphate + NADP(+) = 1-deoxy-D-xylulose 5-phosphate + NADPH + H(+). Its pathway is isoprenoid biosynthesis; isopentenyl diphosphate biosynthesis via DXP pathway; isopentenyl diphosphate from 1-deoxy-D-xylulose 5-phosphate: step 1/6. Its function is as follows. Catalyzes the NADPH-dependent rearrangement and reduction of 1-deoxy-D-xylulose-5-phosphate (DXP) to 2-C-methyl-D-erythritol 4-phosphate (MEP). The sequence is that of 1-deoxy-D-xylulose 5-phosphate reductoisomerase from Synechocystis sp. (strain ATCC 27184 / PCC 6803 / Kazusa).